Consider the following 195-residue polypeptide: Glycerol-3-phosphate acyltransferase (195 aa).

The next 6 helical transmembrane spans lie at 4 to 24 (GLILALVFGYLLGSIPFGLLL), 53 to 73 (GLAAATLLLDALKGTAAVLIA), 80 to 100 (TAVWAGLGAFLGHLFPVWLGF), 110 to 130 (LGVLIGLAWQVALIFAVIWLA), 133 to 153 (FLFRYSSLAALTAAVIVPIAL), and 154 to 174 (YFLSAPQIAVLFVVMSIIVFI).

It belongs to the PlsY family. Probably interacts with PlsX.

It localises to the cell inner membrane. It catalyses the reaction an acyl phosphate + sn-glycerol 3-phosphate = a 1-acyl-sn-glycero-3-phosphate + phosphate. The protein operates within lipid metabolism; phospholipid metabolism. Catalyzes the transfer of an acyl group from acyl-phosphate (acyl-PO(4)) to glycerol-3-phosphate (G3P) to form lysophosphatidic acid (LPA). This enzyme utilizes acyl-phosphate as fatty acyl donor, but not acyl-CoA or acyl-ACP. The sequence is that of Glycerol-3-phosphate acyltransferase from Mesorhizobium japonicum (strain LMG 29417 / CECT 9101 / MAFF 303099) (Mesorhizobium loti (strain MAFF 303099)).